Consider the following 207-residue polypeptide: Zinc finger protein 487 (207 aa).

A KRAB domain is found at 1–43 (MLENYSLLLSVGYCITKPEVVCKLEHGQVLWILEEESPSQSHL). The C2H2-type; atypical zinc-finger motif lies at 177-202 (KQCFEYNQCGKAFHEEAACSTHKRVC).

Belongs to the krueppel C2H2-type zinc-finger protein family.

Its subcellular location is the nucleus. In terms of biological role, may be involved in transcriptional regulation. This Homo sapiens (Human) protein is Zinc finger protein 487 (ZNF487).